Here is a 264-residue protein sequence, read N- to C-terminus: 3-methyl-2-oxobutanoate hydroxymethyltransferase (264 aa).

D45 and D84 together coordinate Mg(2+). Residues 45–46 (DS), D84, and K112 each bind 3-methyl-2-oxobutanoate. E114 contacts Mg(2+). The active-site Proton acceptor is E181.

The protein belongs to the PanB family. In terms of assembly, homodecamer; pentamer of dimers. The cofactor is Mg(2+).

Its subcellular location is the cytoplasm. It carries out the reaction 3-methyl-2-oxobutanoate + (6R)-5,10-methylene-5,6,7,8-tetrahydrofolate + H2O = 2-dehydropantoate + (6S)-5,6,7,8-tetrahydrofolate. The protein operates within cofactor biosynthesis; (R)-pantothenate biosynthesis; (R)-pantoate from 3-methyl-2-oxobutanoate: step 1/2. Its function is as follows. Catalyzes the reversible reaction in which hydroxymethyl group from 5,10-methylenetetrahydrofolate is transferred onto alpha-ketoisovalerate to form ketopantoate. This chain is 3-methyl-2-oxobutanoate hydroxymethyltransferase, found in Escherichia coli O81 (strain ED1a).